The sequence spans 534 residues: Glycolytic genes transcriptional activator GCR2 (534 aa).

A disordered region spans residues 29–122 (LQSVTNSPQT…TGNNASSSAT (94 aa)). Residues 30 to 43 (QSVTNSPQTTTNTP) show a composition bias toward low complexity. The segment covering 64 to 88 (SDSTPNIDEIITSTGSNALTKTNSD) has biased composition (polar residues). Positions 89-122 (SANGTPNGNSSSTSAISNASNPATTGNNASSSAT) are enriched in low complexity. S151 is modified (phosphoserine). Residues 230–333 (LTQGRRKGNS…SNPGTNMLFD (104 aa)) form a disordered region. A compositionally biased stretch (polar residues) spans 238-252 (NSLNTSTKGSPSDLQ). The span at 253–279 (GINNGNNNGNNGNIGNGSNIKNYGNKN) shows a compositional bias: low complexity. The short motif at 281–288 (PNNRTKKR) is the Nuclear localization signal element. A compositionally biased stretch (low complexity) spans 295 to 304 (NAKNGKNNKN). Positions 312–328 (ITDTSAFSNTTISNPGT) are enriched in polar residues. Phosphoserine occurs at positions 406 and 409. The interval 497–534 (IVQLERELELQRQETQWLRKMLIEDMGCVRSMLRDLQR) is leucine-zipper.

As to quaternary structure, homodimer via the leucine-zipper domain. Forms a complex with a GCR1 homodimer.

The protein localises to the nucleus. Its function is as follows. Transcriptional activator required for the expression of glycolytic genes. Enhances the CT box-dependent transcriptional activation of a RAP1-GCR1 complex. Required for GCR1 phosphorylation. The protein is Glycolytic genes transcriptional activator GCR2 (GCR2) of Saccharomyces cerevisiae (strain ATCC 204508 / S288c) (Baker's yeast).